The sequence spans 421 residues: MSKDIPPASDFLAILTERGFLHQCSDPAGLDEKAKSGGLIAYIGFDCTAPSLHVGSLVQIMMLRWLQKTGGKPIVLMGGGTTRVGDPSGKDESRKILTLEEIEANKQGIKQVFSKFVHFGEGKTDALMADNAEWLTALHYIDFLRDVGRHFSVNRMLSMDSVKLRLERDQELSFLEFNYMCCQAYDFVELHKRYGCQLQMGGSDQWGNIVTGIDLGRRMGTAQLYALTSPLLTTASGAKMGKTAKGAVWLDEAMLPVFDYWQFWRNCEDRDVGRFLKLFTELPLDEIARLEALQDAEINEAKKILATEATAMVHGREAAERAADTARQTFEEGVVAASLPSVILQTNEIPAEGLGILAAFAKAGLVNSTSEARRQIKGGGLRLNDQPITDEKAVITIEAIEAGAKLSLGRKKHVLLRLADG.

Tyr42 provides a ligand contact to L-tyrosine. The short motif at 47–56 (CTAPSLHVGS) is the 'HIGH' region element. L-tyrosine is bound by residues Tyr179 and Gln183. A 'KMSKS' region motif is present at residues 239–243 (KMGKT). Position 242 (Lys242) interacts with ATP. The S4 RNA-binding domain maps to 354-419 (LGILAAFAKA…RKKHVLLRLA (66 aa)).

Belongs to the class-I aminoacyl-tRNA synthetase family. TyrS type 1 subfamily. Homodimer.

It is found in the cytoplasm. The catalysed reaction is tRNA(Tyr) + L-tyrosine + ATP = L-tyrosyl-tRNA(Tyr) + AMP + diphosphate + H(+). Its function is as follows. Catalyzes the attachment of tyrosine to tRNA(Tyr) in a two-step reaction: tyrosine is first activated by ATP to form Tyr-AMP and then transferred to the acceptor end of tRNA(Tyr). The chain is Tyrosine--tRNA ligase from Beijerinckia indica subsp. indica (strain ATCC 9039 / DSM 1715 / NCIMB 8712).